Reading from the N-terminus, the 145-residue chain is Putative pre-16S rRNA nuclease (145 aa).

This sequence belongs to the YqgF nuclease family.

Its subcellular location is the cytoplasm. In terms of biological role, could be a nuclease involved in processing of the 5'-end of pre-16S rRNA. This is Putative pre-16S rRNA nuclease from Levilactobacillus brevis (strain ATCC 367 / BCRC 12310 / CIP 105137 / JCM 1170 / LMG 11437 / NCIMB 947 / NCTC 947) (Lactobacillus brevis).